The following is a 168-amino-acid chain: Nicotinamide-nucleotide adenylyltransferase (168 aa).

It belongs to the archaeal NMN adenylyltransferase family.

The protein localises to the cytoplasm. The enzyme catalyses beta-nicotinamide D-ribonucleotide + ATP + H(+) = diphosphate + NAD(+). Its pathway is cofactor biosynthesis; NAD(+) biosynthesis; NAD(+) from nicotinamide D-ribonucleotide: step 1/1. The chain is Nicotinamide-nucleotide adenylyltransferase from Methanocorpusculum labreanum (strain ATCC 43576 / DSM 4855 / Z).